The following is a 484-amino-acid chain: Carbohydrate sulfotransferase 7 (484 aa).

At Met-1–Cys-12 the chain is on the cytoplasmic side. Residues Lys-13 to Asp-33 traverse the membrane as a helical; Signal-anchor for type II membrane protein segment. Topologically, residues Ser-34 to Val-484 are lumenal. A disordered region spans residues Arg-71–Ala-90. An N-linked (GlcNAc...) asparagine glycan is attached at Asn-87. Trp-108–Phe-114 lines the 3'-phosphoadenylyl sulfate pocket. Residue Asn-184 is glycosylated (N-linked (GlcNAc...) asparagine). Arg-276–Ser-284 contributes to the 3'-phosphoadenylyl sulfate binding site. N-linked (GlcNAc...) asparagine glycosylation occurs at Asn-405. Position 460 is a phosphoserine (Ser-460). Positions Ser-460 to Glu-473 are enriched in basic and acidic residues. Residues Ser-460–Val-484 form a disordered region.

The protein belongs to the sulfotransferase 1 family. Gal/GlcNAc/GalNAc subfamily. In terms of tissue distribution, widely expressed. Highly expressed in kidney. Expressed at lower level in heart, lung and liver.

Its subcellular location is the golgi apparatus membrane. The catalysed reaction is chondroitin beta-D-glucuronate + n 3'-phosphoadenylyl sulfate = chondroitin 6'-sulfate + n adenosine 3',5'-bisphosphate + n H(+). In terms of biological role, sulfotransferase that utilizes 3'-phospho-5'-adenylyl sulfate (PAPS) as sulfonate donor to catalyze the transfer of sulfate to position 6 of non-reducing N-acetylglucosamine (GlcNAc) residues. Preferentially acts on mannose-linked GlcNAc. Also able to catalyze the transfer of sulfate to position 6 of the N-acetylgalactosamine (GalNAc) residue of chondroitin. Also acts on core 2 mucin-type oligosaccharide and N-acetyllactosamine oligomer with a lower efficiency. Has weak or no activity toward keratan sulfate and oligosaccharides containing the Galbeta1-4GlcNAc. Catalyzes 6-O-sulfation of beta-benzyl GlcNAc but not alpha- or beta-benzyl GalNAc. The protein is Carbohydrate sulfotransferase 7 (Chst7) of Mus musculus (Mouse).